We begin with the raw amino-acid sequence, 364 residues long: DNA replication and repair protein RecF (364 aa).

30 to 37 (GNNGMGKT) contributes to the ATP binding site.

It belongs to the RecF family.

It localises to the cytoplasm. In terms of biological role, the RecF protein is involved in DNA metabolism; it is required for DNA replication and normal SOS inducibility. RecF binds preferentially to single-stranded, linear DNA. It also seems to bind ATP. The sequence is that of DNA replication and repair protein RecF from Porphyromonas gingivalis (strain ATCC 33277 / DSM 20709 / CIP 103683 / JCM 12257 / NCTC 11834 / 2561).